The following is a 249-amino-acid chain: Enolase-phosphatase E1 (249 aa).

Residues Asp14 and Glu16 each contribute to the Mg(2+) site. Substrate is bound by residues 141 to 142 and Lys175; that span reads SS. Asp200 contacts Mg(2+).

This sequence belongs to the HAD-like hydrolase superfamily. MasA/MtnC family. Monomer. Mg(2+) serves as cofactor.

The protein resides in the cytoplasm. The protein localises to the nucleus. It carries out the reaction 5-methylsulfanyl-2,3-dioxopentyl phosphate + H2O = 1,2-dihydroxy-5-(methylsulfanyl)pent-1-en-3-one + phosphate. It participates in amino-acid biosynthesis; L-methionine biosynthesis via salvage pathway; L-methionine from S-methyl-5-thio-alpha-D-ribose 1-phosphate: step 3/6. The protein operates within amino-acid biosynthesis; L-methionine biosynthesis via salvage pathway; L-methionine from S-methyl-5-thio-alpha-D-ribose 1-phosphate: step 4/6. Functionally, bifunctional enzyme that catalyzes the enolization of 2,3-diketo-5-methylthiopentyl-1-phosphate (DK-MTP-1-P) into the intermediate 2-hydroxy-3-keto-5-methylthiopentenyl-1-phosphate (HK-MTPenyl-1-P), which is then dephosphorylated to form the acireductone 1,2-dihydroxy-3-keto-5-methylthiopentene (DHK-MTPene). The protein is Enolase-phosphatase E1 of Drosophila mojavensis (Fruit fly).